A 1528-amino-acid polypeptide reads, in one-letter code: Multidrug resistance-associated protein 1 (1528 aa).

Residues 1–33 (MALRSFCSADGSDPLWDWNVTWHTSNPDFTKCF) lie on the Extracellular side of the membrane. An N-linked (GlcNAc...) asparagine glycan is attached at Asn19. A helical transmembrane segment spans residues 34 to 54 (QNTVLTWVPCFYLWSCFPLYF). Residues 55–74 (FYLSRHDRGYIQMTHLNKTK) lie on the Cytoplasmic side of the membrane. Residues 75–95 (TALGFFLWIICWADLFYSFWE) form a helical membrane-spanning segment. The Extracellular segment spans residues 96-100 (RSQGV). The chain crosses the membrane as a helical span at residues 101 to 121 (LRAPVLLVSPTLLGITMLLAT). Residues 122-133 (FLIQLERRKGVQ) are Cytoplasmic-facing. A helical membrane pass occupies residues 134 to 154 (SSGIMLTFWLVALLCALAILR). Residues 155-172 (SKIISALKKDAHVDVFRD) lie on the Extracellular side of the membrane. Residues 173–193 (STFYLYFTLVLVQLVLSCFSD) traverse the membrane as a helical segment. Residues 194–317 (CSPLFSETVH…KDREPSLFKV (124 aa)) are Cytoplasmic-facing. The residue at position 277 (Tyr277) is a Phosphotyrosine. Ser290 carries the phosphoserine modification. A helical transmembrane segment spans residues 318–338 (LYKTFGPYFLMSFLYKALHDL). In terms of domain architecture, ABC transmembrane type-1 1 spans 326-609 (FLMSFLYKAL…LPMVISSIVQ (284 aa)). Over 339–364 (MMFAGPKILELIINFVNDREAPDWQG) the chain is Extracellular. A helical transmembrane segment spans residues 365 to 385 (YFYTALLFVSACLQTLALHQY). Topologically, residues 386–441 (FHICFVSGMRIKTAVVGAVYRKALLITNAARKSSTVGEIVNLMSVDAQRFMDLATY) are cytoplasmic. A helical membrane pass occupies residues 442 to 462 (INMIWSAPLQVILALYFLWLS). Topologically, residues 463-465 (LGP) are extracellular. The chain crosses the membrane as a helical span at residues 466-486 (SVLAGVAVMILMVPLNAVMAM). At 487–548 (KTKTYQVAHM…VLKKSAYLAA (62 aa)) the chain is on the cytoplasmic side. Lys504 is modified (N6-succinyllysine). The chain crosses the membrane as a helical span at residues 549 to 569 (VGTFTWVCTPFLVALSTFAVF). Residues 570–591 (VTVDERNILDAKKAFVSLALFN) are Extracellular-facing. The chain crosses the membrane as a helical span at residues 592–612 (ILRFPLNILPMVISSIVQASV). Over 613-963 (SLKRLRIFLS…VQLSVYWNYM (351 aa)) the chain is Cytoplasmic. The 225-residue stretch at 644–868 (ITVKNATFTW…DGAFAEFLRT (225 aa)) folds into the ABC transporter 1 domain. Residue 678 to 685 (GQVGCGKS) coordinates ATP. Disordered regions lie at residues 876–895 (LASE…PVEN) and 909–929 (RHLS…SSIA). 4 positions are modified to phosphoserine: Ser878, Ser882, Ser912, and Ser927. Positions 910-929 (HLSNSSSHSGDTSQQHSSIA) are enriched in polar residues. Residues 964–984 (KAIGLFITFLSIFLFLCNHVS) form a helical membrane-spanning segment. The 283-residue stretch at 971–1253 (TFLSIFLFLC…LVRMSSEMET (283 aa)) folds into the ABC transmembrane type-1 2 domain. The Extracellular portion of the chain corresponds to 985 to 1022 (ALASNYWLSLWTDDPPVVNGTQANRNFRLSVYGALGIL). Asn1003 is a glycosylation site (N-linked (GlcNAc...) asparagine). The helical transmembrane segment at 1023 to 1043 (QGAAIFGYSMAVSIGGIFASR) threads the bilayer. Topologically, residues 1044 to 1086 (RLHLDLLYNVLRSPMSFFERTPSGNLVNRFSKELDTVDSMIPQ) are cytoplasmic. The chain crosses the membrane as a helical span at residues 1087 to 1107 (VIKMFMGSLFSVIGAVIIILL). Position 1108 (Ala1108) is a topological domain, extracellular. The helical transmembrane segment at 1109–1129 (TPIAAVIIPPLGLVYFFVQRF) threads the bilayer. Over 1130-1200 (YVASSRQLKR…VANRWLAVRL (71 aa)) the chain is Cytoplasmic. The helical transmembrane segment at 1201-1221 (ECVGNCIVLFAALFAVISRHS) threads the bilayer. Topologically, residues 1222–1223 (LS) are extracellular. A helical membrane pass occupies residues 1224–1244 (AGLVGLSVSYSLQITAYLNWL). The Cytoplasmic segment spans residues 1245 to 1528 (VRMSSEMETN…YSMAKDAGLV (284 aa)). In terms of domain architecture, ABC transporter 2 spans 1290–1524 (VEFRDYCLRY…RGIFYSMAKD (235 aa)). 1324-1331 (GRTGAGKS) contributes to the ATP binding site.

The protein belongs to the ABC transporter superfamily. ABCC family. Conjugate transporter (TC 3.A.1.208) subfamily.

The protein resides in the cell membrane. It is found in the basolateral cell membrane. The catalysed reaction is ATP + H2O + xenobioticSide 1 = ADP + phosphate + xenobioticSide 2.. It carries out the reaction an S-substituted glutathione(in) + ATP + H2O = an S-substituted glutathione(out) + ADP + phosphate + H(+). It catalyses the reaction leukotriene C4(in) + ATP + H2O = leukotriene C4(out) + ADP + phosphate + H(+). The enzyme catalyses sphing-4-enine 1-phosphate(in) + ATP + H2O = sphing-4-enine 1-phosphate(out) + ADP + phosphate + H(+). The catalysed reaction is 17beta-estradiol 17-O-(beta-D-glucuronate)(in) + ATP + H2O = 17beta-estradiol 17-O-(beta-D-glucuronate)(out) + ADP + phosphate + H(+). It carries out the reaction vincristine(in) + ATP + H2O = vincristine(out) + ADP + phosphate + H(+). It catalyses the reaction daunorubicin(in) + ATP + H2O = daunorubicin(out) + ADP + phosphate + H(+). The enzyme catalyses 2',3'-cGAMP(in) + ATP + H2O = 2',3'-cGAMP(out) + ADP + phosphate + H(+). The catalysed reaction is S-[(2E,6E,10E)-geranylgeranyl]-L-glutathione(in) + ATP + H2O = S-[(2E,6E,10E)-geranylgeranyl]-L-glutathione(out) + ADP + phosphate + H(+). It carries out the reaction prostaglandin A2-S-(R)-glutathione(in) + ATP + H2O = prostaglandin A2-S-(R)-glutathione(out) + ADP + phosphate + H(+). It catalyses the reaction prostaglandin A2-S-(S)-glutathione(in) + ATP + H2O = prostaglandin A2-S-(S)-glutathione(out) + ADP + phosphate + H(+). With respect to regulation, MK 571 inhibits sphingosine 1-phosphate and leukotriene C4 export. In terms of biological role, mediates export of organic anions and drugs from the cytoplasm. Mediates ATP-dependent transport of glutathione and glutathione conjugates, leukotriene C4, estradiol-17-beta-o-glucuronide, methotrexate, antiviral drugs and other xenobiotics. Confers resistance to anticancer drugs by decreasing accumulation of drugs in cells, and by mediating ATP- and GSH-dependent drug export. Hydrolyzes ATP with low efficiency. Catalyzes the export of sphingosine 1-phosphate from mast cells independently of their degranulation. Participates in inflammatory response by allowing export of leukotriene C4 from leukotriene C4-synthesizing cells. Mediates ATP-dependent, GSH-independent cyclic GMP-AMP (cGAMP) export. Thus, by limiting intracellular cGAMP concentrations negatively regulates the cGAS-STING pathway. Exports S-geranylgeranyl-glutathione (GGG) in lymphoid cells and stromal compartments of lymphoid organs. ABCC1 (via extracellular transport) with GGT5 (via GGG catabolism) establish GGG gradients within lymphoid tissues to position P2RY8-positive lymphocytes at germinal centers in lymphoid follicles and restrict their chemotactic transmigration from blood vessels to the bone marrow parenchyma. Mediates basolateral export of GSH-conjugated R- and S-prostaglandin A2 diastereomers in polarized epithelial cells. The protein is Multidrug resistance-associated protein 1 of Mus musculus (Mouse).